Here is a 297-residue protein sequence, read N- to C-terminus: Carbamate kinase (297 aa).

This sequence belongs to the carbamate kinase family.

Its subcellular location is the cytoplasm. The catalysed reaction is hydrogencarbonate + NH4(+) + ATP = carbamoyl phosphate + ADP + H2O + H(+). It carries out the reaction carbamate + ATP = carbamoyl phosphate + ADP. It catalyses the reaction hydrogencarbonate + NH4(+) = carbamate + H2O + H(+). Its pathway is nitrogen metabolism; (S)-allantoin degradation. Kinase involved in the anaerobic nitrogen utilization via the assimilation of allantoin. Catalyzes the transfer of a phosphate group from carbamoyl phosphate to ADP to produce ATP and leave carbamate, which spontaneously hydrolyzes to ammonia and hydrogencarbonate. The polypeptide is Carbamate kinase (Escherichia coli (strain K12)).